Reading from the N-terminus, the 447-residue chain is ATP-dependent protease ATPase subunit HslU (447 aa).

Residues I18, 60-65, D259, E325, and R397 contribute to the ATP site; that span reads GVGKTE.

It belongs to the ClpX chaperone family. HslU subfamily. As to quaternary structure, a double ring-shaped homohexamer of HslV is capped on each side by a ring-shaped HslU homohexamer. The assembly of the HslU/HslV complex is dependent on binding of ATP.

Its subcellular location is the cytoplasm. In terms of biological role, ATPase subunit of a proteasome-like degradation complex; this subunit has chaperone activity. The binding of ATP and its subsequent hydrolysis by HslU are essential for unfolding of protein substrates subsequently hydrolyzed by HslV. HslU recognizes the N-terminal part of its protein substrates and unfolds these before they are guided to HslV for hydrolysis. The protein is ATP-dependent protease ATPase subunit HslU of Burkholderia cenocepacia (strain ATCC BAA-245 / DSM 16553 / LMG 16656 / NCTC 13227 / J2315 / CF5610) (Burkholderia cepacia (strain J2315)).